The sequence spans 824 residues: C-Jun-amino-terminal kinase-interacting protein 2 (824 aa).

Disordered stretches follow at residues 1–28 (MADR…QDIS), 40–160 (ITDD…GFDL), 172–349 (CSPA…DSPW), and 361–501 (EGSS…APRD). Residues 77–110 (DFQEFEMIDDNEEEDDEDEEEEEEEEEGDGEGQE) show a composition bias toward acidic residues. The tract at residues 110–275 (EGGDPGSEAP…RMISSISETE (166 aa)) is JNK-binding domain (JBD). Polar residues predominate over residues 141–156 (LRLTTLGAQDSLNNNG). Residues 239 to 498 (GRGGRRSSQE…PGGRGTGPSA (260 aa)) form a necessary for interaction with FGF13 region. 3 positions are modified to phosphoserine: serine 254, serine 302, and serine 305. Positions 268–305 (ISSISETELELSSDGGSSSSGRSSHLTNSIEEASSPAS) are enriched in low complexity. Positions 327-346 (TNSEYESGSESEPDLSEDAD) are enriched in acidic residues. Residues 416–432 (APPPPAPAAPRPGPAQP) show a composition bias toward pro residues. Over residues 451 to 467 (AAPGRAARPGRACSAAC) the composition is skewed to low complexity. A compositionally biased stretch (acidic residues) spans 468 to 484 (SEEEDEEDDEEEEDAED). In terms of domain architecture, SH3 spans 604–665 (EREQTHRAVF…PAFYAHAVPG (62 aa)). Residues 677 to 813 (PCWVERFDVQ…FLEYYQEHLA (137 aa)) enclose the PID domain.

This sequence belongs to the JIP scaffold family. In terms of assembly, forms homo- or heterooligomeric complexes. Binds specific components of the JNK signaling pathway namely JNK1, JNK2, JNK3, MAP2K7, MAP3K10, MAP3K11, MAP3K12 and MAPK13. Also binds the proline-rich domain-containing splice variant of apolipoprotein E receptor 2 (ApoER2). Binds the cytoplasmic tails of LRP1 and LRP2 (Megalin). Binds the TPR motif-containing C-terminal of kinesin light chain, Klc1, pre-assembled MAPK8IP1 scaffolding complexes are then transported as a cargo of kinesin, to the required subcellular location. Interacts with the cytoplasmic domain of APP. Interacts with DCLK2. Interacts with TIAM1 and TIAM2. Interacts with FGF13; enables the interaction with MAPK13 and may regulate the MAPK8IP2 scaffolding activity. Interacts with SH3RF2. Expressed mainly in the brain and pancreas, including insulin-secreting cells. In the nervous system, more abundantly expressed in the cerebellum, pituitary gland, occipital lobe and the amygdala. Also expressed in fetal brain. Very low levels found in uterus, ovary, prostate, colon, testis, adrenal gland, thyroid gland and salivary gland.

The protein resides in the cytoplasm. Its function is as follows. The JNK-interacting protein (JIP) group of scaffold proteins selectively mediates JNK signaling by aggregating specific components of the MAPK cascade to form a functional JNK signaling module. JIP2 inhibits IL1 beta-induced apoptosis in insulin-secreting cells. May function as a regulator of vesicle transport, through interactions with the JNK-signaling components and motor proteins. This Homo sapiens (Human) protein is C-Jun-amino-terminal kinase-interacting protein 2 (MAPK8IP2).